We begin with the raw amino-acid sequence, 336 residues long: F-box protein PP2-B1 (336 aa).

The tract at residues 1–22 (MEQIHGGDSNSGGGGGGSSRND) is disordered. A compositionally biased stretch (gly residues) spans 9-18 (SNSGGGGGGS). Residues 29–75 (ASRFDALPEDCISKVISHTSPRDACVVASVSKSVKSAAQSDLVWEMF) form the F-box domain.

As to quaternary structure, part of a SCF (ASK-cullin-F-box) protein ligase complex. Interacts with SKP1A/ASK1 and SPK1B/ASK2.

It localises to the nucleus. It functions in the pathway protein modification; protein ubiquitination. Component of SCF(ASK-cullin-F-box) E3 ubiquitin ligase complexes, which may mediate the ubiquitination and subsequent proteasomal degradation of target proteins. This is F-box protein PP2-B1 (PP2B1) from Arabidopsis thaliana (Mouse-ear cress).